Reading from the N-terminus, the 514-residue chain is Cytochrome P450 monooxygenase verB (514 aa).

Residues 5 to 25 form a helical membrane-spanning segment; sequence WLSASVLITAVILLVDYLNYY. Cys-457 serves as a coordination point for heme.

The protein belongs to the cytochrome P450 family. It depends on heme as a cofactor.

Its subcellular location is the membrane. Its pathway is mycotoxin biosynthesis. In terms of biological role, cytochrome P450 monooxygenase; part of the gene cluster that mediates the biosynthesis of 11'-deoxyverticillin A, one of the dimeric epipolythiodioxopiperazines (ETPs) from the verticillin family that act as mycotoxins. 11'-deoxyverticillin A is required for normal conidiation. The nonribosomal peptide synthetase verP is speculated to be responsible for condensation of amino acids to form the carbon skeleton of verticillin, whereas the cluster-specific tailoring enzymes are involved in further modifications leading to the production of 11'-deoxyverticillin A. In Clonostachys rogersoniana, this protein is Cytochrome P450 monooxygenase verB.